The chain runs to 408 residues: LL-diaminopimelate aminotransferase (408 aa).

Substrate-binding residues include tyrosine 15 and glycine 42. Residues tyrosine 72, 108-109 (SK), tyrosine 132, asparagine 187, tyrosine 218, and 246-248 (SFS) contribute to the pyridoxal 5'-phosphate site. Residues lysine 109, tyrosine 132, and asparagine 187 each coordinate substrate. At lysine 249 the chain carries N6-(pyridoxal phosphate)lysine. The pyridoxal 5'-phosphate site is built by arginine 257 and asparagine 292. Residues asparagine 292 and arginine 388 each coordinate substrate.

Belongs to the class-I pyridoxal-phosphate-dependent aminotransferase family. LL-diaminopimelate aminotransferase subfamily. Homodimer. It depends on pyridoxal 5'-phosphate as a cofactor.

The enzyme catalyses (2S,6S)-2,6-diaminopimelate + 2-oxoglutarate = (S)-2,3,4,5-tetrahydrodipicolinate + L-glutamate + H2O + H(+). It functions in the pathway amino-acid biosynthesis; L-lysine biosynthesis via DAP pathway; LL-2,6-diaminopimelate from (S)-tetrahydrodipicolinate (aminotransferase route): step 1/1. Involved in the synthesis of meso-diaminopimelate (m-DAP or DL-DAP), required for both lysine and peptidoglycan biosynthesis. Catalyzes the direct conversion of tetrahydrodipicolinate to LL-diaminopimelate. Is also able to catalyze the reverse reaction in vitro, i.e. the transamination of LL-diaminopimelate with 2-oxoglutarate to produce tetrahydrodipicolinate and glutamate. Cannot use m-DAP, lysine or ornithine as the amino-group donor, when using 2-oxoglutarate as the amino-group acceptor. Cannot use pyruvate, indole 3-pyruvate, oxaloacetate or phenyl pyruvate as the amino-group acceptor, when using LL-DAP as the amino-group donor. This is LL-diaminopimelate aminotransferase from Leptospira interrogans serogroup Icterohaemorrhagiae serovar copenhageni (strain Fiocruz L1-130).